We begin with the raw amino-acid sequence, 511 residues long: Light-independent protochlorophyllide reductase subunit B (511 aa).

Asp-36 provides a ligand contact to [4Fe-4S] cluster. Residue Asp-299 is the Proton donor of the active site. Gly-434–Met-435 is a substrate binding site.

Belongs to the ChlB/BchB/BchZ family. Protochlorophyllide reductase is composed of three subunits; ChlL, ChlN and ChlB. Forms a heterotetramer of two ChlB and two ChlN subunits. [4Fe-4S] cluster is required as a cofactor.

It is found in the plastid. Its subcellular location is the chloroplast. The enzyme catalyses chlorophyllide a + oxidized 2[4Fe-4S]-[ferredoxin] + 2 ADP + 2 phosphate = protochlorophyllide a + reduced 2[4Fe-4S]-[ferredoxin] + 2 ATP + 2 H2O. Its pathway is porphyrin-containing compound metabolism; chlorophyll biosynthesis (light-independent). Its function is as follows. Component of the dark-operative protochlorophyllide reductase (DPOR) that uses Mg-ATP and reduced ferredoxin to reduce ring D of protochlorophyllide (Pchlide) to form chlorophyllide a (Chlide). This reaction is light-independent. The NB-protein (ChlN-ChlB) is the catalytic component of the complex. The chain is Light-independent protochlorophyllide reductase subunit B from Huperzia lucidula (Shining clubmoss).